The sequence spans 444 residues: MREIVLTQIGQCGNQIGAKFWEVISDEHAINSAGTYHGDSHLQLERINVYYNEASGGRYVPRAVLVDLEPGTMDSVRSGPFGQVFRPDNFIFGQCGAGNNWAKGHYTEGAELMESVMDVVRKEAESCDCLQGFQLTHSLGGGTGSGMGTLLLSKIREEYPDRIINTFSILPSPKVSDTVVEPYNATLSVHQLIENADETFCIDNEALYDICSKTLKLPTPTYGDLNHLVCATMSGVTTCLRFPGQLNADLRKLAVNMVPFPRLHFFMPGFAPLTSRGSQQYRALTVAELTQQMFDAKNMMAACDPRHGRYLTAAAIFRGRMPMREVDEQMFNIQDKNSSYFADWLPNNVKTAVCDIPPRGLKMSATFIGNNTAIQELFKRVSEQFTAMFRRKAFLHWYTGEGMDEMEFTEAESNMNDLVSEYQQYQDATAEEEEDEEYAEEEVA.

The MREI motif motif lies at 1-4 (MREI). The GTP site is built by Gln-11, Glu-69, Ser-138, Gly-142, Thr-143, and Gly-144. Glu-69 is a binding site for Mg(2+). Phosphoserine; by CDK1 is present on Ser-172. The GTP site is built by Asn-204 and Asn-226. A disordered region spans residues 423–444 (QQYQDATAEEEEDEEYAEEEVA). Over residues 429–444 (TAEEEEDEEYAEEEVA) the composition is skewed to acidic residues. Glu-436 carries the post-translational modification 5-glutamyl polyglutamate.

The protein belongs to the tubulin family. Dimer of alpha and beta chains. A typical microtubule is a hollow water-filled tube with an outer diameter of 25 nm and an inner diameter of 15 nM. Alpha-beta heterodimers associate head-to-tail to form protofilaments running lengthwise along the microtubule wall with the beta-tubulin subunit facing the microtubule plus end conferring a structural polarity. Microtubules usually have 13 protofilaments but different protofilament numbers can be found in some organisms and specialized cells. The cofactor is Mg(2+). Some glutamate residues at the C-terminus are polyglycylated, resulting in polyglycine chains on the gamma-carboxyl group. Glycylation is mainly limited to tubulin incorporated into axonemes (cilia and flagella) whereas glutamylation is prevalent in neuronal cells, centrioles, axonemes, and the mitotic spindle. Both modifications can coexist on the same protein on adjacent residues, and lowering polyglycylation levels increases polyglutamylation, and reciprocally. Cilia and flagella glycylation is required for their stability and maintenance. Flagella glycylation controls sperm motility. Post-translationally, some glutamate residues at the C-terminus are polyglutamylated, resulting in polyglutamate chains on the gamma-carboxyl group. Polyglutamylation plays a key role in microtubule severing by spastin (SPAST). SPAST preferentially recognizes and acts on microtubules decorated with short polyglutamate tails: severing activity by SPAST increases as the number of glutamates per tubulin rises from one to eight, but decreases beyond this glutamylation threshold. Glutamylation is also involved in cilia motility. In terms of processing, phosphorylated on Ser-172 by CDK1 during the cell cycle, from metaphase to telophase, but not in interphase. This phosphorylation inhibits tubulin incorporation into microtubules.

The protein resides in the cytoplasm. The protein localises to the cytoskeleton. It is found in the spindle. Tubulin is the major constituent of microtubules, a cylinder consisting of laterally associated linear protofilaments composed of alpha- and beta-tubulin heterodimers. Microtubules grow by the addition of GTP-tubulin dimers to the microtubule end, where a stabilizing cap forms. Below the cap, tubulin dimers are in GDP-bound state, owing to GTPase activity of alpha-tubulin. Has a key role in meiotic spindle assembly and oocyte maturation. In Pan troglodytes (Chimpanzee), this protein is Tubulin beta-8 chain (TUBB8).